Reading from the N-terminus, the 88-residue chain is Cell division topological specificity factor (88 aa).

This sequence belongs to the MinE family.

Its function is as follows. Prevents the cell division inhibition by proteins MinC and MinD at internal division sites while permitting inhibition at polar sites. This ensures cell division at the proper site by restricting the formation of a division septum at the midpoint of the long axis of the cell. This Clostridium kluyveri (strain ATCC 8527 / DSM 555 / NBRC 12016 / NCIMB 10680 / K1) protein is Cell division topological specificity factor.